A 294-amino-acid chain; its full sequence is uncharacterized protein (294 aa).

A disordered region spans residues 181–204 (DEPFPTTKNHNNDKRETNDKDDQQ). Over residues 190-204 (HNNDKRETNDKDDQQ) the composition is skewed to basic and acidic residues.

Belongs to the IIV-6 391R family.

This is an uncharacterized protein from Acheta domesticus (House cricket).